Here is a 180-residue protein sequence, read N- to C-terminus: MENFFNQFFENIGEDKNREGLKETPKRVQELWKFLYKGYKEDPKVALKSAYFQGVCDEMIVAQNIEFYSTCEHHLLPFLGNISVGYIPKEKIVGISAIAKLIEIYSKRLQIQERLTTQIAETFDEIIEPRGVIVVCEAKHLCMSMQGVQKQNAIIKTSVLRGLFKKDPKTRAEFMQLLKS.

C71, H74, and C142 together coordinate Zn(2+).

The protein belongs to the GTP cyclohydrolase I family. Homomer.

It carries out the reaction GTP + H2O = 7,8-dihydroneopterin 3'-triphosphate + formate + H(+). The protein operates within cofactor biosynthesis; 7,8-dihydroneopterin triphosphate biosynthesis; 7,8-dihydroneopterin triphosphate from GTP: step 1/1. The chain is GTP cyclohydrolase 1 from Helicobacter pylori (strain P12).